We begin with the raw amino-acid sequence, 55 residues long: Large ribosomal subunit protein bL33C (55 aa).

Belongs to the bacterial ribosomal protein bL33 family.

The sequence is that of Large ribosomal subunit protein bL33C from Kineococcus radiotolerans (strain ATCC BAA-149 / DSM 14245 / SRS30216).